Reading from the N-terminus, the 387-residue chain is 3-hydroxyisobutyryl-CoA hydrolase-like protein 5 (387 aa).

The residue at position 2 (Ala2) is an N-acetylalanine.

This sequence belongs to the enoyl-CoA hydratase/isomerase family.

The polypeptide is 3-hydroxyisobutyryl-CoA hydrolase-like protein 5 (Arabidopsis thaliana (Mouse-ear cress)).